The following is a 411-amino-acid chain: Aspartate kinase (411 aa).

In terms of domain architecture, ACT spans 265–348 (LTIRGVPDTP…KIAKVSIVGV (84 aa)).

The protein belongs to the aspartokinase family.

It localises to the cytoplasm. It catalyses the reaction L-aspartate + ATP = 4-phospho-L-aspartate + ADP. It functions in the pathway amino-acid biosynthesis; L-lysine biosynthesis via DAP pathway; (S)-tetrahydrodipicolinate from L-aspartate: step 1/4. Its pathway is amino-acid biosynthesis; L-methionine biosynthesis via de novo pathway; L-homoserine from L-aspartate: step 1/3. The protein operates within amino-acid biosynthesis; L-threonine biosynthesis; L-threonine from L-aspartate: step 1/5. With respect to regulation, allosterically feedback inhibited by L-lysine and L-threonine individually and also subject to a concerted feedback inhibition by these amino acids. Functionally, involved in the biosynthesis of L-aspartate-beta-semialdehyde which is a central intermediate in the biosynthesis of different amino acids (L-lysine, L-methionine, L-threonine). Catalyzes the phosphorylation of the beta-carboxyl group of L-aspartate to yield 4-phospho-L-aspartate. The protein is Aspartate kinase of Pseudomonas putida (strain ATCC 47054 / DSM 6125 / CFBP 8728 / NCIMB 11950 / KT2440).